The primary structure comprises 203 residues: dITP/XTP pyrophosphatase (203 aa).

9–14 provides a ligand contact to substrate; it reads SSNAGK. E42 and D72 together coordinate Mg(2+). The active-site Proton acceptor is D72. Residues S73, 161-164, K184, and 189-190 each bind substrate; these read FGYD and HR.

Belongs to the HAM1 NTPase family. As to quaternary structure, homodimer. The cofactor is Mg(2+).

The catalysed reaction is XTP + H2O = XMP + diphosphate + H(+). The enzyme catalyses dITP + H2O = dIMP + diphosphate + H(+). It carries out the reaction ITP + H2O = IMP + diphosphate + H(+). Functionally, pyrophosphatase that catalyzes the hydrolysis of nucleoside triphosphates to their monophosphate derivatives, with a high preference for the non-canonical purine nucleotides XTP (xanthosine triphosphate), dITP (deoxyinosine triphosphate) and ITP. Seems to function as a house-cleaning enzyme that removes non-canonical purine nucleotides from the nucleotide pool, thus preventing their incorporation into DNA/RNA and avoiding chromosomal lesions. In Acidobacterium capsulatum (strain ATCC 51196 / DSM 11244 / BCRC 80197 / JCM 7670 / NBRC 15755 / NCIMB 13165 / 161), this protein is dITP/XTP pyrophosphatase.